The following is a 428-amino-acid chain: Enolase (428 aa).

Residue Q163 participates in (2R)-2-phosphoglycerate binding. Catalysis depends on E205, which acts as the Proton donor. Mg(2+) contacts are provided by D242, E286, and D313. 4 residues coordinate (2R)-2-phosphoglycerate: K338, R367, S368, and K389. K338 serves as the catalytic Proton acceptor.

Belongs to the enolase family. Mg(2+) is required as a cofactor.

It is found in the cytoplasm. The protein resides in the secreted. The protein localises to the cell surface. It catalyses the reaction (2R)-2-phosphoglycerate = phosphoenolpyruvate + H2O. It participates in carbohydrate degradation; glycolysis; pyruvate from D-glyceraldehyde 3-phosphate: step 4/5. Catalyzes the reversible conversion of 2-phosphoglycerate (2-PG) into phosphoenolpyruvate (PEP). It is essential for the degradation of carbohydrates via glycolysis. The protein is Enolase of Lactobacillus helveticus (strain DPC 4571).